Reading from the N-terminus, the 77-residue chain is MKTSVLLVILGIAAITVQCTASESVEQDSLRTFVDTVLGWNAEMASEARCGGWMAKCADSDDCCETFHCTRFNVCGK.

The first 21 residues, 1–21, serve as a signal peptide directing secretion; the sequence is MKTSVLLVILGIAAITVQCTA. A propeptide spanning residues 22–49 is cleaved from the precursor; sequence SESVEQDSLRTFVDTVLGWNAEMASEAR. Disulfide bonds link C50-C64, C57-C69, and C63-C75. A Lysine amide modification is found at K77.

It belongs to the neurotoxin 10 (Hwtx-1) family. 65 (Jztx-21) subfamily. As to expression, expressed by the venom gland.

Its subcellular location is the secreted. Its function is as follows. Probable ion channel inhibitor. The protein is U14-theraphotoxin-Cg1a 3 of Chilobrachys guangxiensis (Chinese earth tiger tarantula).